We begin with the raw amino-acid sequence, 509 residues long: Type II methyltransferase M.BsoBI (509 aa).

The protein belongs to the N(4)/N(6)-methyltransferase family. N(4) subfamily.

The catalysed reaction is a 2'-deoxycytidine in DNA + S-adenosyl-L-methionine = an N(4)-methyl-2'-deoxycytidine in DNA + S-adenosyl-L-homocysteine + H(+). Its function is as follows. An alpha subtype methylase that recognizes the double-stranded sequence 5'-CYCGRG-3', methylates C-1 on both strands, and protects the DNA from cleavage by the BsoBI endonuclease. In Geobacillus stearothermophilus (Bacillus stearothermophilus), this protein is Type II methyltransferase M.BsoBI.